A 380-amino-acid chain; its full sequence is Cobalt-precorrin-5B C(1)-methyltransferase (380 aa).

Belongs to the CbiD family.

It catalyses the reaction Co-precorrin-5B + S-adenosyl-L-methionine = Co-precorrin-6A + S-adenosyl-L-homocysteine. Its pathway is cofactor biosynthesis; adenosylcobalamin biosynthesis; cob(II)yrinate a,c-diamide from sirohydrochlorin (anaerobic route): step 6/10. Catalyzes the methylation of C-1 in cobalt-precorrin-5B to form cobalt-precorrin-6A. This Methanosphaera stadtmanae (strain ATCC 43021 / DSM 3091 / JCM 11832 / MCB-3) protein is Cobalt-precorrin-5B C(1)-methyltransferase.